Consider the following 311-residue polypeptide: MTLLLLGAVLLVAQPQLVHSHPAAPGPGLKQQELLRKVIILPEDTGEGTASNGSTQQLPQTIIIGVRKGGTRALLEMLSLHPDVAAAENEVHFFDWEEHYSQGLGWYLTQMPFSSPHQLTVEKTPAYFTSPKVPERIHSMNPTIRLLLILRDPSERVLSDYTQVLYNHLQKHKPYPPIEDLLMRDGRLNLDYKALNRSLYHAHMLNWLRFFPLGHIHIVDGDRLIRDPFPEIQKVERFLKLSPQINASNFYFNKTKGFYCLRDSGKDRCLHESKGRAHPQVDPKLLDKLHEYFHEPNKKFFKLVGRTFDWH.

The first 20 residues, 1–20, serve as a signal peptide directing secretion; the sequence is MTLLLLGAVLLVAQPQLVHS. The N-linked (GlcNAc...) asparagine glycan is linked to Asn-52. 3'-phosphoadenylyl sulfate contacts are provided by residues 68-72, Arg-151, and Ser-159; that span reads KGGTR. Residues Asn-196, Asn-246, and Asn-253 are each glycosylated (N-linked (GlcNAc...) asparagine). Tyr-259 is a binding site for 3'-phosphoadenylyl sulfate. A disulfide bridge connects residues Cys-260 and Cys-269. Residue 274–278 coordinates 3'-phosphoadenylyl sulfate; that stretch reads KGRAH.

Belongs to the sulfotransferase 1 family.

The protein resides in the golgi apparatus lumen. It catalyses the reaction alpha-D-glucosaminyl-[heparan sulfate](n) + 3'-phosphoadenylyl sulfate = 3-sulfo-alpha-D-glucosaminyl-[heparan sulfate](n) + adenosine 3',5'-bisphosphate + H(+). In terms of biological role, sulfotransferase that utilizes 3'-phospho-5'-adenylyl sulfate (PAPS) to catalyze the transfer of a sulfo group to position 3 of glucosamine residues in heparan. Catalyzes the rate limiting step in the biosynthesis of heparan sulfate (HSact). This modification is a crucial step in the biosynthesis of anticoagulant heparan sulfate as it completes the structure of the antithrombin pentasaccharide binding site. In Mus musculus (Mouse), this protein is Heparan sulfate glucosamine 3-O-sulfotransferase 1 (Hs3st1).